A 147-amino-acid chain; its full sequence is MVDHARAARMAKRIQTIVASAIERQIKDRRLELVTITDARVTGDLHDATVFYTVRGTDIGTEPDYDQAAEALTRAKGQLRKIVGDELSVRFTPTLSFELDTVPEASAHMEELLARARARDAELAKLKEGAQPAGDANPYKTSDEEED.

Residues 123–147 (LAKLKEGAQPAGDANPYKTSDEEED) are disordered.

It belongs to the RbfA family. In terms of assembly, monomer. Binds 30S ribosomal subunits, but not 50S ribosomal subunits or 70S ribosomes.

The protein localises to the cytoplasm. Functionally, one of several proteins that assist in the late maturation steps of the functional core of the 30S ribosomal subunit. Associates with free 30S ribosomal subunits (but not with 30S subunits that are part of 70S ribosomes or polysomes). Required for efficient processing of 16S rRNA. May interact with the 5'-terminal helix region of 16S rRNA. The sequence is that of Ribosome-binding factor A from Corynebacterium aurimucosum (strain ATCC 700975 / DSM 44827 / CIP 107346 / CN-1) (Corynebacterium nigricans).